The sequence spans 360 residues: tRNA (guanine(9)-N1)-methyltransferase (360 aa).

Residues 1-77 (MENQDTEQSQ…RRKERIKEAE (77 aa)) are disordered. 2 stretches are compositionally biased toward basic and acidic residues: residues 8–24 (QSQK…DFKR) and 33–55 (MTKR…DEYK). The segment covering 56-67 (QKKREKKKAARE) has biased composition (basic residues). A compositionally biased stretch (basic and acidic residues) spans 68-77 (RRKERIKEAE). One can recognise an SAM-dependent MTase TRM10-type domain in the interval 94-293 (RAKVAPQEQI…EVLPPRKVKG (200 aa)). S-adenosyl-L-methionine is bound by residues 199–200 (LT), Gly-219, 223–227 (DKNRY), Cys-231, Leu-245, and 257–259 (QVL). Asp-223 (proton acceptor) is an active-site residue. The disordered stretch occupies residues 291-360 (VKGKLTHGSD…SDEPSKGADH (70 aa)). The segment covering 297–306 (HGSDPEKSIE) has biased composition (basic and acidic residues). Residues 307-324 (PSEVSEQPVSSEQSEQPV) are compositionally biased toward low complexity. Positions 328 to 343 (QPVSSEQPVLSEQPVL) are enriched in polar residues.

This sequence belongs to the class IV-like SAM-binding methyltransferase superfamily. TRM10 family. Monomer.

The protein resides in the cytoplasm. The protein localises to the nucleus. The enzyme catalyses guanosine(9) in tRNA + S-adenosyl-L-methionine = N(1)-methylguanosine(9) in tRNA + S-adenosyl-L-homocysteine + H(+). Its function is as follows. S-adenosyl-L-methionine-dependent guanine N(1)-methyltransferase that catalyzes the formation of N(1)-methylguanine at position 9 (m1G9) in cytoplasmic tRNA. This Debaryomyces hansenii (strain ATCC 36239 / CBS 767 / BCRC 21394 / JCM 1990 / NBRC 0083 / IGC 2968) (Yeast) protein is tRNA (guanine(9)-N1)-methyltransferase.